We begin with the raw amino-acid sequence, 244 residues long: Na(+)-translocating NADH-quinone reductase subunit E (244 aa).

6 consecutive transmembrane segments (helical) span residues 11 to 31 (LLGIFLQATFIQNILLSTFLG), 50 to 70 (MSVALVLTITGSINWLVHYFI), 90 to 110 (FLELIMFIVVIAAFTQILELL), 123 to 143 (GIFLPLIAVNCAILGGVLFGI), 153 to 173 (VVFSLGSGCGWWLAIVLFATI), and 191 to 211 (ISFITTGLMAMAFMGLTGIDI).

Belongs to the NqrDE/RnfAE family. As to quaternary structure, composed of six subunits; NqrA, NqrB, NqrC, NqrD, NqrE and NqrF.

It is found in the cell inner membrane. It carries out the reaction a ubiquinone + n Na(+)(in) + NADH + H(+) = a ubiquinol + n Na(+)(out) + NAD(+). Functionally, NQR complex catalyzes the reduction of ubiquinone-1 to ubiquinol by two successive reactions, coupled with the transport of Na(+) ions from the cytoplasm to the periplasm. NqrA to NqrE are probably involved in the second step, the conversion of ubisemiquinone to ubiquinol. The sequence is that of Na(+)-translocating NADH-quinone reductase subunit E from Chlamydia trachomatis serovar L2 (strain ATCC VR-902B / DSM 19102 / 434/Bu).